A 436-amino-acid polypeptide reads, in one-letter code: Glutamyl-tRNA reductase (436 aa).

Substrate contacts are provided by residues threonine 52–arginine 55, serine 105, glutamate 110–glutamine 112, and glutamine 116. Catalysis depends on cysteine 53, which acts as the Nucleophile. Glycine 184 to glycine 189 serves as a coordination point for NADP(+).

Belongs to the glutamyl-tRNA reductase family. As to quaternary structure, homodimer.

The enzyme catalyses (S)-4-amino-5-oxopentanoate + tRNA(Glu) + NADP(+) = L-glutamyl-tRNA(Glu) + NADPH + H(+). Its pathway is porphyrin-containing compound metabolism; protoporphyrin-IX biosynthesis; 5-aminolevulinate from L-glutamyl-tRNA(Glu): step 1/2. Its function is as follows. Catalyzes the NADPH-dependent reduction of glutamyl-tRNA(Glu) to glutamate 1-semialdehyde (GSA). The polypeptide is Glutamyl-tRNA reductase (Halobacterium salinarum (strain ATCC 29341 / DSM 671 / R1)).